The following is a 203-amino-acid chain: NADH-quinone oxidoreductase subunit C (203 aa).

The protein belongs to the complex I 30 kDa subunit family. NDH-1 is composed of 14 different subunits. Subunits NuoB, C, D, E, F, and G constitute the peripheral sector of the complex.

Its subcellular location is the cell inner membrane. The catalysed reaction is a quinone + NADH + 5 H(+)(in) = a quinol + NAD(+) + 4 H(+)(out). Functionally, NDH-1 shuttles electrons from NADH, via FMN and iron-sulfur (Fe-S) centers, to quinones in the respiratory chain. The immediate electron acceptor for the enzyme in this species is believed to be ubiquinone. Couples the redox reaction to proton translocation (for every two electrons transferred, four hydrogen ions are translocated across the cytoplasmic membrane), and thus conserves the redox energy in a proton gradient. The polypeptide is NADH-quinone oxidoreductase subunit C (Delftia acidovorans (strain DSM 14801 / SPH-1)).